A 510-amino-acid polypeptide reads, in one-letter code: Protein phosphatase 1H (510 aa).

One can recognise a PPM-type phosphatase domain in the interval 73 to 503 (STGYAEVINA…DDISVYVIPL (431 aa)). Disordered stretches follow at residues 105-128 (VQSTPNKNSSSKRRSSLPNAEGLQ) and 188-225 (LGEEPESTSSNSRTLTRAASLRGGSGAPGSPSTPPTRF).

Belongs to the PP2C family.

The protein resides in the nucleus. Its subcellular location is the cytoplasm. It carries out the reaction O-phospho-L-seryl-[protein] + H2O = L-seryl-[protein] + phosphate. It catalyses the reaction O-phospho-L-threonyl-[protein] + H2O = L-threonyl-[protein] + phosphate. In Xenopus tropicalis (Western clawed frog), this protein is Protein phosphatase 1H (ppm1h).